The primary structure comprises 74 residues: Ubiquitin-like protein FUBI (74 aa).

It belongs to the ubiquitin family.

This is Ubiquitin-like protein FUBI (Fau) from Mus spicilegus (Steppe mouse).